We begin with the raw amino-acid sequence, 119 residues long: Small ribosomal subunit protein uS13 (119 aa).

Over residues 92 to 110 the composition is skewed to basic residues; that stretch reads RKDTCKRSTKKNARTRKGP. Residues 92-119 are disordered; the sequence is RKDTCKRSTKKNARTRKGPKKDNRWKER.

This sequence belongs to the universal ribosomal protein uS13 family. Part of the 30S ribosomal subunit. Forms a loose heterodimer with protein S19. Forms two bridges to the 50S subunit in the 70S ribosome.

Located at the top of the head of the 30S subunit, it contacts several helices of the 16S rRNA. In the 70S ribosome it contacts the 23S rRNA (bridge B1a) and protein L5 of the 50S subunit (bridge B1b), connecting the 2 subunits; these bridges are implicated in subunit movement. Contacts the tRNAs in the A and P-sites. This chain is Small ribosomal subunit protein uS13, found in Mycoplasma sp.